The sequence spans 213 residues: High frequency lysogenization protein HflD homolog (213 aa).

It belongs to the HflD family.

It is found in the cytoplasm. The protein localises to the cell inner membrane. In Nitrosococcus oceani (strain ATCC 19707 / BCRC 17464 / JCM 30415 / NCIMB 11848 / C-107), this protein is High frequency lysogenization protein HflD homolog.